The following is a 513-amino-acid chain: ATP synthase subunit alpha (513 aa).

ATP is bound at residue 169-176; sequence GDRQIGKT.

Belongs to the ATPase alpha/beta chains family. F-type ATPases have 2 components, CF(1) - the catalytic core - and CF(0) - the membrane proton channel. CF(1) has five subunits: alpha(3), beta(3), gamma(1), delta(1), epsilon(1). CF(0) has three main subunits: a(1), b(2) and c(9-12). The alpha and beta chains form an alternating ring which encloses part of the gamma chain. CF(1) is attached to CF(0) by a central stalk formed by the gamma and epsilon chains, while a peripheral stalk is formed by the delta and b chains.

The protein resides in the cell inner membrane. The catalysed reaction is ATP + H2O + 4 H(+)(in) = ADP + phosphate + 5 H(+)(out). Functionally, produces ATP from ADP in the presence of a proton gradient across the membrane. The alpha chain is a regulatory subunit. This chain is ATP synthase subunit alpha, found in Shewanella woodyi (strain ATCC 51908 / MS32).